We begin with the raw amino-acid sequence, 78 residues long: Small ribosomal subunit protein bS18 (78 aa).

This sequence belongs to the bacterial ribosomal protein bS18 family. In terms of assembly, part of the 30S ribosomal subunit. Forms a tight heterodimer with protein bS6.

Its function is as follows. Binds as a heterodimer with protein bS6 to the central domain of the 16S rRNA, where it helps stabilize the platform of the 30S subunit. The polypeptide is Small ribosomal subunit protein bS18 (Geobacillus sp. (strain WCH70)).